A 342-amino-acid polypeptide reads, in one-letter code: Holliday junction branch migration complex subunit RuvB (342 aa).

Positions 1–179 (MTSILSPEKS…FGIPMRLNFY (179 aa)) are large ATPase domain (RuvB-L). Residues Leu18, Arg19, Gly60, Lys63, Thr64, Thr65, 126–128 (EDF), Arg169, Tyr179, and Arg216 each bind ATP. Mg(2+) is bound at residue Thr64. A small ATPAse domain (RuvB-S) region spans residues 180–250 (NTEELKKVLN…IANFGLNRLE (71 aa)). The tract at residues 253–342 (IIGLDSNDYR…HQFNIFNDNE (90 aa)) is head domain (RuvB-H). DNA is bound by residues Arg289, Arg308, and Arg313.

Belongs to the RuvB family. Homohexamer. Forms an RuvA(8)-RuvB(12)-Holliday junction (HJ) complex. HJ DNA is sandwiched between 2 RuvA tetramers; dsDNA enters through RuvA and exits via RuvB. An RuvB hexamer assembles on each DNA strand where it exits the tetramer. Each RuvB hexamer is contacted by two RuvA subunits (via domain III) on 2 adjacent RuvB subunits; this complex drives branch migration. In the full resolvosome a probable DNA-RuvA(4)-RuvB(12)-RuvC(2) complex forms which resolves the HJ.

It localises to the cytoplasm. It catalyses the reaction ATP + H2O = ADP + phosphate + H(+). In terms of biological role, the RuvA-RuvB-RuvC complex processes Holliday junction (HJ) DNA during genetic recombination and DNA repair, while the RuvA-RuvB complex plays an important role in the rescue of blocked DNA replication forks via replication fork reversal (RFR). RuvA specifically binds to HJ cruciform DNA, conferring on it an open structure. The RuvB hexamer acts as an ATP-dependent pump, pulling dsDNA into and through the RuvAB complex. RuvB forms 2 homohexamers on either side of HJ DNA bound by 1 or 2 RuvA tetramers; 4 subunits per hexamer contact DNA at a time. Coordinated motions by a converter formed by DNA-disengaged RuvB subunits stimulates ATP hydrolysis and nucleotide exchange. Immobilization of the converter enables RuvB to convert the ATP-contained energy into a lever motion, pulling 2 nucleotides of DNA out of the RuvA tetramer per ATP hydrolyzed, thus driving DNA branch migration. The RuvB motors rotate together with the DNA substrate, which together with the progressing nucleotide cycle form the mechanistic basis for DNA recombination by continuous HJ branch migration. Branch migration allows RuvC to scan DNA until it finds its consensus sequence, where it cleaves and resolves cruciform DNA. The polypeptide is Holliday junction branch migration complex subunit RuvB (Rickettsia bellii (strain RML369-C)).